A 497-amino-acid chain; its full sequence is MNDKTENTLSSDVTEVRAQKLKLLREQVGDVYPAHFHRTLTNAELGAKYESLESDVETQDVVTVAGRVYSSRNSGMFMDIHDASGKIQIFSHKDTTPEEARALLPMIDIGDIIGVTGIVRRTKRGELTINAQKIEMLTKSLLPMPEKWHGLSDIELRYRKRHLDIMTNEDSKLRFQQRSKIVSGIRRFMENDGFMEVETPMLQSIYGGATAEPFKTHHNTLKLDMYLRIAPELFLKRTLVSGLTDKVFEINRNFRNEGVSTRHNPEFTMMECYWAYADYEDMMDLVERLFETLALSIHGTTEFDFGDKQLSFKGPFKRVPMPDAVKQVTGIDFLAIKTDEEARTAAKAAGFAVEKDWTWGECLAFIFEEKVESTLIQPSHVTHFPKDISPFAKEVPGEPRLVERFETYCNAWELGNAFSELNDPEEQRRRMVEQLEQAHARGEKEKQLDEEFLDAIDQGMPPAGGLGIGVDRLIMLLTNAPSIRDVILFPARRNKAD.

Mg(2+) is bound by residues Glu-406 and Glu-413.

Belongs to the class-II aminoacyl-tRNA synthetase family. As to quaternary structure, homodimer. The cofactor is Mg(2+).

It localises to the cytoplasm. The enzyme catalyses tRNA(Lys) + L-lysine + ATP = L-lysyl-tRNA(Lys) + AMP + diphosphate. The chain is Lysine--tRNA ligase from Rhizobium leguminosarum bv. trifolii (strain WSM2304).